Here is a 218-residue protein sequence, read N- to C-terminus: N-(5'-phosphoribosyl)anthranilate isomerase (218 aa).

It belongs to the TrpF family.

The enzyme catalyses N-(5-phospho-beta-D-ribosyl)anthranilate = 1-(2-carboxyphenylamino)-1-deoxy-D-ribulose 5-phosphate. It functions in the pathway amino-acid biosynthesis; L-tryptophan biosynthesis; L-tryptophan from chorismate: step 3/5. This chain is N-(5'-phosphoribosyl)anthranilate isomerase, found in Bordetella pertussis (strain Tohama I / ATCC BAA-589 / NCTC 13251).